The chain runs to 278 residues: Ribosomal RNA small subunit methyltransferase A (278 aa).

S-adenosyl-L-methionine is bound by residues asparagine 27, leucine 29, glycine 54, glutamate 75, aspartate 95, and asparagine 118.

The protein belongs to the class I-like SAM-binding methyltransferase superfamily. rRNA adenine N(6)-methyltransferase family. RsmA subfamily.

It is found in the cytoplasm. It carries out the reaction adenosine(1518)/adenosine(1519) in 16S rRNA + 4 S-adenosyl-L-methionine = N(6)-dimethyladenosine(1518)/N(6)-dimethyladenosine(1519) in 16S rRNA + 4 S-adenosyl-L-homocysteine + 4 H(+). Its function is as follows. Specifically dimethylates two adjacent adenosines (A1518 and A1519) in the loop of a conserved hairpin near the 3'-end of 16S rRNA in the 30S particle. May play a critical role in biogenesis of 30S subunits. This Chlamydia caviae (strain ATCC VR-813 / DSM 19441 / 03DC25 / GPIC) (Chlamydophila caviae) protein is Ribosomal RNA small subunit methyltransferase A.